We begin with the raw amino-acid sequence, 418 residues long: Tyrosine--tRNA ligase (418 aa).

Tyr34 is a binding site for L-tyrosine. Positions 39 to 48 (PTADSLHLGH) match the 'HIGH' region motif. Tyr169 and Gln173 together coordinate L-tyrosine. The short motif at 229–233 (KFGKS) is the 'KMSKS' region element. ATP is bound at residue Lys232. One can recognise an S4 RNA-binding domain in the interval 352–418 (LNIVDMLVTA…GKKKYAVLTY (67 aa)).

This sequence belongs to the class-I aminoacyl-tRNA synthetase family. TyrS type 1 subfamily. Homodimer.

It is found in the cytoplasm. It carries out the reaction tRNA(Tyr) + L-tyrosine + ATP = L-tyrosyl-tRNA(Tyr) + AMP + diphosphate + H(+). Its function is as follows. Catalyzes the attachment of tyrosine to tRNA(Tyr) in a two-step reaction: tyrosine is first activated by ATP to form Tyr-AMP and then transferred to the acceptor end of tRNA(Tyr). The protein is Tyrosine--tRNA ligase of Streptococcus equi subsp. equi (strain 4047).